Reading from the N-terminus, the 608-residue chain is Afamin (608 aa).

The N-terminal stretch at 1 to 21 (MRHLKLTGFIFFLLPLTESLA) is a signal peptide. 3 consecutive Albumin domains span residues 22-210 (LPTK…APIT), 211-403 (QYLK…KFNE), and 404-599 (TTQR…KTGD). A glycan (N-linked (GlcNAc...) asparagine) is linked at N33. 11 disulfides stabilise this stretch: C77-C86, C99-C114, C113-C124, C148-C193, C192-C201, C224-C270, C269-C277, C289-C303, C302-C313, C340-C385, and C384-C393. Residue N109 is glycosylated (N-linked (GlcNAc...) asparagine). N-linked (GlcNAc...) asparagine glycosylation is present at N153. The segment at 215 to 319 (ASSSYQRNVC…REACIINANK (105 aa)) is binding pocket for hydrophobic ligands. The N-linked (GlcNAc...) asparagine glycan is linked to N402. 5 cysteine pairs are disulfide-bonded: C416–C462, C461–C470, C483–C499, C498–C509, and C580–C589. N-linked (GlcNAc...) asparagine glycosylation is present at N488. The segment at 583-608 (VQEPESCFSPESSKTGDESQATEKQR) is disordered. Basic and acidic residues predominate over residues 596-608 (KTGDESQATEKQR).

It belongs to the ALB/AFP/VDB family. As to quaternary structure, forms a 1:1 complex with Wnt family members; interacts with WNT1, WNT2B, WNT3, WNT5A, WNT7A, WNT7B, WNT8, WNT9A, WNT9B, WNT10A and WNT10B. Interacts with WNT3A. Post-translationally, N-glycosylated; more than 90% of the glycans are sialylated. Detected in brain, especially on brain capillaries (at protein level). Expressed in isolated brain capillaries.

The protein resides in the secreted. In terms of biological role, functions as a carrier for hydrophobic molecules in body fluids. Essential for the solubility and activity of lipidated Wnt family members, including WNT1, WNT2B, WNT3, WNT3A, WNT5A, WNT7A, WNT7B, WNT8, WNT9A, WNT9B, WNT10A and WNT10B. Binds vitamin E. May transport vitamin E in body fluids under conditions where the lipoprotein system is not sufficient. May be involved in the transport of vitamin E across the blood-brain barrier. This chain is Afamin (Afm), found in Mus musculus (Mouse).